A 227-amino-acid chain; its full sequence is UPF0758 protein Rxyl_1530 (227 aa).

An MPN domain is found at Val-106 to Leu-227. His-177, His-179, and Asp-190 together coordinate Zn(2+). The JAMM motif signature appears at His-177–Asp-190.

The protein belongs to the UPF0758 family.

The sequence is that of UPF0758 protein Rxyl_1530 from Rubrobacter xylanophilus (strain DSM 9941 / JCM 11954 / NBRC 16129 / PRD-1).